Reading from the N-terminus, the 754-residue chain is MTILTHTLGFPRVGLRRELKKAQESYWAGNSTREALLAVGRELRARHWEQQKQAGIDLLPVGDFAWYDHVLTTSLLLGNVPARHQNNDGSVDIDTLFRIGRGRAPTGEPAAAAEMTKWFNTNYHYIVPEFSKGQQFRLTWTQLLEEVDEALALGHKIKPVLLGPVTYLWLGKVKGEPFDRLTLLKDILPVYQHVLAELAKRGVEWVQIDEPALVLELPQAWLDAFKPAYDALAGQVKLLLTTYFEGVTPNLDTIIALPVQGLHVDLIHGKDDVAELHQRLPVDWLLSAGLINGRNVWRADLTEKYAQINAIVGKRALWVASSCSLLHSPIDLSVETRLDTEVKSWFAFALQKCGELALLRDALNSGETAALEEWSAPIQARRHSRRVHNAAVEKRLAAITAQASQRENPYEVRAEAQRARFKLPAWPTTTIGSFPQTTEIRGLRLDFKKGNLDANNYRTGIAEHIKQAIIEQERLGLDVLVHGEAERNDMVEYFGEHLDGFVFTQNGWVQSYGSRCVKPPVVIGDISRPAPITVEWAKYAQSLTDKPVKGMLTGPVTILCWSFPREDVTRETIAKQIALALRDEVADLEAAGIGIIQIDEPALREGLPLRRSDWDAYLEWGVEAFRINAAVAKDETQIHTHMCYCEFNDIMDSIAALDADVITIETSRSDMELLESFEAFDYPNEIGPGVYDIHSPNVPSVEWIEALLKKAAQRIPAQRLWVNPDCGLKTRGWPETRAALANMVKAAHNLRQAK.

5-methyltetrahydropteroyltri-L-glutamate-binding positions include 17-20 (RELK) and Lys-117. L-homocysteine is bound by residues 431–433 (IGS) and Glu-484. L-methionine is bound by residues 431–433 (IGS) and Glu-484. Residues 515–516 (RC) and Trp-561 contribute to the 5-methyltetrahydropteroyltri-L-glutamate site. Asp-599 provides a ligand contact to L-homocysteine. L-methionine is bound at residue Asp-599. Glu-605 contacts 5-methyltetrahydropteroyltri-L-glutamate. Positions 641, 643, and 665 each coordinate Zn(2+). His-694 serves as the catalytic Proton donor. Cys-726 is a Zn(2+) binding site.

The protein belongs to the vitamin-B12 independent methionine synthase family. Zn(2+) serves as cofactor.

It carries out the reaction 5-methyltetrahydropteroyltri-L-glutamate + L-homocysteine = tetrahydropteroyltri-L-glutamate + L-methionine. It functions in the pathway amino-acid biosynthesis; L-methionine biosynthesis via de novo pathway; L-methionine from L-homocysteine (MetE route): step 1/1. Catalyzes the transfer of a methyl group from 5-methyltetrahydrofolate to homocysteine resulting in methionine formation. This Salmonella enteritidis PT4 (strain P125109) protein is 5-methyltetrahydropteroyltriglutamate--homocysteine methyltransferase.